Here is a 402-residue protein sequence, read N- to C-terminus: AA9 family lytic polysaccharide monooxygenase E (402 aa).

A signal peptide spans 1–16; sequence MSRLVSFASLLAAVNA. His-17 is a Cu(2+) binding site. Intrachain disulfides connect Cys-72–Cys-194 and Cys-113–Cys-117. The N-linked (GlcNAc...) asparagine glycan is linked to Asn-75. Position 102 (His-102) interacts with Cu(2+). Asn-154 is a glycosylation site (N-linked (GlcNAc...) asparagine). O2 is bound by residues His-180 and Gln-189. Residue Tyr-191 participates in Cu(2+) binding. A CBM1 domain is found at 364–400; the sequence is GSNPLYAQCGGLNFKGASGCVAGATCKKMNPYYSQCV.

It belongs to the polysaccharide monooxygenase AA9 family. Cu(2+) serves as cofactor.

The protein localises to the secreted. It catalyses the reaction [(1-&gt;4)-beta-D-glucosyl]n+m + reduced acceptor + O2 = 4-dehydro-beta-D-glucosyl-[(1-&gt;4)-beta-D-glucosyl]n-1 + [(1-&gt;4)-beta-D-glucosyl]m + acceptor + H2O.. In terms of biological role, lytic polysaccharide monooxygenase (LPMO) that depolymerizes crystalline and amorphous polysaccharides via the oxidation of scissile alpha- or beta-(1-4)-glycosidic bonds, yielding C1 or C4 oxidation products. Catalysis by LPMOs requires the reduction of the active-site copper from Cu(II) to Cu(I) by a reducing agent and H(2)O(2) or O(2) as a cosubstrate. The sequence is that of AA9 family lytic polysaccharide monooxygenase E from Emericella nidulans (strain FGSC A4 / ATCC 38163 / CBS 112.46 / NRRL 194 / M139) (Aspergillus nidulans).